The following is a 122-amino-acid chain: Large ribosomal subunit protein bL12 (122 aa).

This sequence belongs to the bacterial ribosomal protein bL12 family. As to quaternary structure, homodimer. Part of the ribosomal stalk of the 50S ribosomal subunit. Forms a multimeric L10(L12)X complex, where L10 forms an elongated spine to which 2 to 4 L12 dimers bind in a sequential fashion. Binds GTP-bound translation factors.

Functionally, forms part of the ribosomal stalk which helps the ribosome interact with GTP-bound translation factors. Is thus essential for accurate translation. The polypeptide is Large ribosomal subunit protein bL12 (Acinetobacter baumannii (strain AB0057)).